Consider the following 255-residue polypeptide: Kallikrein-15 (255 aa).

The first 15 residues, 1–15 (MWLLLPLSFLLTSTA), serve as a signal peptide directing secretion. The propeptide at 16–20 (QDGGK) is activation peptide. The segment at 21–253 (LLEGEECAPH…YVKWIRETMK (233 aa)) is serine protease. A disulfide bridge links Cys46 with Cys62. Residues His61 and Asp105 each act as charge relay system in the active site. Cystine bridges form between Cys137-Cys214, Cys179-Cys193, and Cys204-Cys229. A glycan (N-linked (GlcNAc...) asparagine) is linked at Asn170. The active-site Charge relay system is Ser208. N-linked (GlcNAc...) asparagine glycosylation occurs at Asn231.

The protein belongs to the peptidase S1 family. Kallikrein subfamily.

It is found in the secreted. In terms of biological role, protease whose physiological substrate is not yet known. The protein is Kallikrein-15 (KLK15) of Saguinus oedipus (Cotton-top tamarin).